A 941-amino-acid polypeptide reads, in one-letter code: MAAYLQWRRFVFFEKELVKEPLGNDGAAPGAAPVSGSAASKFLCLPPGITVCDSGRGSLVFGDMEGQIWFLPRSLQLTGFQAYKLRVTHLYQLKQHNILASVGEDEEGINPLVKIWNLEKRDGGNPLCTRIFPAIPGTEPTVVSCLTVHENLNFMAIGFTDGSVTLNKGDITRDRHSKTQILHKGNYPVTGLAFRQAGKTTHLFVVTTENVQSYIVSGKDYPRVELDTHGCGLRCSALSDPSQDLQFIVAGDECVYLYQPDERGPCFAFEGHKLIVHWFRGYLVIVSRDRKVSPKSEFTSRDSQNSDKQILNIYDLCNKFIAYSAGFEDIVDVLAEWGSLYVLTRDGRVHALQEKDTQTKLEMLFKKNLFEMAINLAKSQHLDSDGLAQIFMQYGDHLYSKGNHDGAVQQYIRTIGKLEPSYVIRKFLDAQRIHNLTAYLQTLHRQSLANADHTTLLLNCYTKLKDSSKLEEFIKTKSESEVHFDVETAIKVLRQAGYYSHALYLAENHAHHEWYLKIQLEDIKNYQEALRYIGKLPFEQAESNMKRYGKTLMHHIPEQTTQLLKGLCTDYRPSLEGRGDREALSCRASSEEFIPIFANNPRELKAFLEHMSEVQPDSPQGIYDTLLELRLQNWAHEKDPQAKEKLHAEAISLLKSGRFCDVFDKALVLCQMHDFQDGVLYLYEQGKLFQQIMHYHMQHEQYRQVIAVCERHGEQEPSLWEQALSYFARKEEDCKEYVAAVLRHIENKSLMPPLLVVQTLAHNSTATLSIIRDYLVQKLQKQSQQIAQDELRVRRYREETTRIRQEIQELKASPKIFQKTKCSICNSALELPSVHFLCGHSFHQHCFESYSESDADCPTCLPENRKVMDMIRAQEQKRDLHDQFQHQLKCSNDSFSVIADYFGRGVFNKLTLLTDPPTARLTPSLEAGLQRDLLMHSRRGT.

Alanine 2 bears the N-acetylalanine mark. 2 CHCR repeats span residues 411 to 561 (YIRT…EQTT) and 572 to 736 (RPSL…DCKE). Residues 772–813 (RDYLVQKLQKQSQQIAQDELRVRRYREETTRIRQEIQELKAS) adopt a coiled-coil conformation. Residue serine 813 is modified to Phosphoserine. An RING-type zinc finger spans residues 822-861 (CSICNSALELPSVHFLCGHSFHQHCFESYSESDADCPTCL). Position 904 is an omega-N-methylarginine (arginine 904). Serine 924 bears the Phosphoserine mark.

This sequence belongs to the VPS11 family. As to quaternary structure, core component of at least two putative endosomal tethering complexes, the homotypic fusion and vacuole protein sorting (HOPS) complex and the class C core vacuole/endosome tethering (CORVET) complex. Their common core is composed of the class C Vps proteins VPS11, VPS16, VPS18 and VPS33A, which in HOPS further associates with VPS39 and VPS41 and in CORVET with VPS8 and TGFBRAP1. Interacts with RAB5C. Interacts with TGFBRAP1, MON1B, STX7, STX17, ECPAS, EZR, RDX, MSN. Associates with adaptor protein complex 3 (AP-3) and clathrin:AP-3 complexes. Interacts with PLEKHM1.

It localises to the late endosome membrane. The protein localises to the lysosome membrane. It is found in the cytoplasmic vesicle. The protein resides in the early endosome. Its subcellular location is the autophagosome. It localises to the clathrin-coated vesicle. In terms of biological role, plays a role in vesicle-mediated protein trafficking to lysosomal compartments including the endocytic membrane transport and autophagic pathways. Believed to act as a core component of the putative HOPS and CORVET endosomal tethering complexes which are proposed to be involved in the Rab5-to-Rab7 endosome conversion probably implicating MON1A/B, and via binding SNAREs and SNARE complexes to mediate tethering and docking events during SNARE-mediated membrane fusion. The HOPS complex is proposed to be recruited to Rab7 on the late endosomal membrane and to regulate late endocytic, phagocytic and autophagic traffic towards lysosomes. The CORVET complex is proposed to function as a Rab5 effector to mediate early endosome fusion probably in specific endosome subpopulations. Required for fusion of endosomes and autophagosomes with lysosomes. Involved in cargo transport from early to late endosomes and required for the transition from early to late endosomes. The sequence is that of Vacuolar protein sorting-associated protein 11 homolog (Vps11) from Mus musculus (Mouse).